A 147-amino-acid chain; its full sequence is Hemoglobin subunit beta (147 aa).

The region spanning 3–147 is the Globin domain; it reads HWTAEEKQLI…VAHALARKYH (145 aa). 2 residues coordinate heme b: H64 and H93.

This sequence belongs to the globin family. As to quaternary structure, heterotetramer of 2 alpha (or alpha-D) and 2 beta chains. In terms of tissue distribution, red blood cells.

Functionally, involved in oxygen transport from the lung to the various peripheral tissues. The beta chain is a component of adult hemoglobin A and D. The protein is Hemoglobin subunit beta (HBB) of Gallus gallus (Chicken).